Reading from the N-terminus, the 116-residue chain is Ribonuclease T (116 aa).

Residues 18–99 (KRAILVGHNS…YDTEKTAELF (82 aa)) enclose the Exonuclease domain. His-86 acts as the Proton donor/acceptor in catalysis.

It belongs to the RNase T family. As to quaternary structure, homodimer.

Functionally, trims short 3' overhangs of a variety of RNA species, leaving a one or two nucleotide 3' overhang. Responsible for the end-turnover of tRNA: specifically removes the terminal AMP residue from uncharged tRNA (tRNA-C-C-A). Also appears to be involved in tRNA biosynthesis. This is Ribonuclease T from Azotobacter vinelandii.